A 312-amino-acid polypeptide reads, in one-letter code: Gamma-soluble NSF attachment protein (312 aa).

Residues 281–312 form a disordered region; that stretch reads KKKAAAPPQAKPEGTAAPAAEEEEDEYAGGLC. Low complexity predominate over residues 285–299; it reads AAPPQAKPEGTAAPA. Positions 300–312 are enriched in acidic residues; it reads AEEEEDEYAGGLC.

It belongs to the SNAP family. Interacts with RAB11FIP5. Interacts with VTI1A.

The protein resides in the membrane. It localises to the golgi apparatus. Its function is as follows. Required for vesicular transport between the endoplasmic reticulum and the Golgi apparatus. The protein is Gamma-soluble NSF attachment protein of Bos taurus (Bovine).